We begin with the raw amino-acid sequence, 93 residues long: Large ribosomal subunit protein uL23cz/uL23cy (93 aa).

This sequence belongs to the universal ribosomal protein uL23 family. Part of the 50S ribosomal subunit.

It is found in the plastid. It localises to the chloroplast. Its function is as follows. Binds to 23S rRNA. This is Large ribosomal subunit protein uL23cz/uL23cy (rpl23-A) from Jasminum nudiflorum (Winter jasmine).